We begin with the raw amino-acid sequence, 240 residues long: SURF1-like protein (240 aa).

Transmembrane regions (helical) follow at residues 7 to 23 and 201 to 219; these read VFITFTILISLGFWQLS and YALTWFGLAISLIVIYVIY.

Belongs to the SURF1 family.

The protein resides in the cell membrane. This chain is SURF1-like protein, found in Rickettsia conorii (strain ATCC VR-613 / Malish 7).